Here is a 250-residue protein sequence, read N- to C-terminus: Large ribosomal subunit protein uL30 (250 aa).

It belongs to the universal ribosomal protein uL30 family.

In Yarrowia lipolytica (strain CLIB 122 / E 150) (Yeast), this protein is Large ribosomal subunit protein uL30 (RPL7).